We begin with the raw amino-acid sequence, 1332 residues long: Misshapen-like kinase 1 (1332 aa).

The Protein kinase domain maps to 25 to 289 (FELVEVVGNG…TEQLLKFPFI (265 aa)). ATP contacts are provided by residues 31–39 (VGNGTYGQV) and Lys-54. Asp-153 functions as the Proton acceptor in the catalytic mechanism. 3 disordered regions span residues 300–347 (IQLK…NVPG), 363–383 (KSNSEALKQQQQLQQQQQRDP), and 395–887 (QRRI…GTMV). Residues 317-333 (EETEYEYSGSEEEDDSH) are compositionally biased toward acidic residues. 2 positions are modified to phosphoserine: Ser-324 and Ser-326. Over residues 371-380 (QQQQLQQQQQ) the composition is skewed to low complexity. Basic and acidic residues predominate over residues 396-466 (RRIEEQKEER…EEQRQSERLQ (71 aa)). A compositionally biased stretch (low complexity) spans 479 to 497 (LQQQQQQQQLQKQQQQQLL). Arg-501 and Arg-509 each carry omega-N-methylarginine. Over residues 518–528 (AWAREVEERTR) the composition is skewed to basic and acidic residues. Over residues 547 to 561 (PEPPIPQASPGPPGP) the composition is skewed to pro residues. Over residues 598 to 608 (RSQSLQDQPTR) the composition is skewed to polar residues. A Phosphoserine modification is found at Ser-641. Positions 670–682 (QRTSSIATALNTS) are enriched in polar residues. The residue at position 701 (Ser-701) is a Phosphoserine. A compositionally biased stretch (pro residues) spans 716–729 (PKPPGPPAQPPGPP). Residues 736-748 (DLRRSDPGWERSD) show a composition bias toward basic and acidic residues. Phosphoserine occurs at positions 754, 763, 777, 778, and 782. Over residues 804–821 (LLKERTLDEAPRPPKKAM) the composition is skewed to basic and acidic residues. Acidic residues predominate over residues 828 to 841 (EEVESSEDDEEEGE). The segment at 866-1332 (MVVHDVEEIT…TLNRNCIMNW (467 aa)) is mediates interaction with RAP2A. A Phosphothreonine modification is found at Thr-891. A disordered region spans residues 902 to 943 (DSNGYTNLPDVVQPSHSPTENSKGQSPPSKDGSGDYQSRGLV). Residues 915–929 (PSHSPTENSKGQSPP) show a composition bias toward polar residues. In terms of domain architecture, CNH spans 1019 to 1306 (NSEILCAALW…KFLCERNDKV (288 aa)).

Belongs to the protein kinase superfamily. STE Ser/Thr protein kinase family. STE20 subfamily. In terms of assembly, interacts with TANC1. Interacts with RAP2A. Isoform 4 interacts with NCK1. Mg(2+) serves as cofactor. In terms of processing, autophosphorylated. As to expression, expressed in the brain, isoform 2 is more abundant than isoform 1. Isoform 3 is ubiquitously expressed. Isoform 1 is most abundant in the skeletal muscle. Isoform 4 is ubiquitously expressed with relative high levels in brain, skeletal muscle, pancreas and testis.

It localises to the cytoplasm. The protein localises to the postsynaptic density. The protein resides in the cell projection. Its subcellular location is the axon. It is found in the dendrite. It localises to the golgi apparatus. The catalysed reaction is L-seryl-[protein] + ATP = O-phospho-L-seryl-[protein] + ADP + H(+). It carries out the reaction L-threonyl-[protein] + ATP = O-phospho-L-threonyl-[protein] + ADP + H(+). In terms of biological role, serine/threonine kinase which acts as a negative regulator of Ras-related Rap2-mediated signal transduction to control neuronal structure and AMPA receptor trafficking. Required for normal synaptic density, dendrite complexity, as well as surface AMPA receptor expression in hippocampal neurons. Can activate the JNK and MAPK14/p38 pathways and mediates stimulation of the stress-activated protein kinase MAPK14/p38 MAPK downstream of the Raf/ERK pathway. Phosphorylates TANC1 upon stimulation by RAP2A, MBP and SMAD1. Has an essential function in negative selection of thymocytes, perhaps by coupling NCK1 to activation of JNK1. Activator of the Hippo signaling pathway which plays a pivotal role in organ size control and tumor suppression by restricting proliferation and promoting apoptosis. MAP4Ks act in parallel to and are partially redundant with STK3/MST2 and STK4/MST2 in the phosphorylation and activation of LATS1/2, and establish MAP4Ks as components of the expanded Hippo pathway. Its function is as follows. Isoform 4 can activate the JNK pathway. Involved in the regulation of actin cytoskeleton reorganization, cell-matrix adhesion, cell-cell adhesion and cell migration. The protein is Misshapen-like kinase 1 of Homo sapiens (Human).